The following is a 160-amino-acid chain: Transcription antitermination protein NusB (160 aa).

It belongs to the NusB family.

In terms of biological role, involved in transcription antitermination. Required for transcription of ribosomal RNA (rRNA) genes. Binds specifically to the boxA antiterminator sequence of the ribosomal RNA (rrn) operons. The chain is Transcription antitermination protein NusB from Maricaulis maris (strain MCS10) (Caulobacter maris).